Consider the following 156-residue polypeptide: Organelle RRM domain-containing protein 2, mitochondrial (156 aa).

A mitochondrion-targeting transit peptide spans 1-28 (MAMAMRLPAISRAVTEVASAPVGLRRLF). The region spanning 56-134 (TNLFVSGLSK…WVIFAEYARP (79 aa)) is the RRM domain. Ser-64 carries the phosphoserine modification. Polar residues predominate over residues 137–148 (QSQSYQPQNNMS). A disordered region spans residues 137–156 (QSQSYQPQNNMSRPPYYGNR).

Interacts with RBG3/ORRM3. Binds to RBG2/ORRM5.

It localises to the mitochondrion. Functionally, involved in C-to-U editing of mitochondrial RNA. Functions as minor mitochondrial editing factor. Controls 6 percent of the mitochondrial editing sites. This Arabidopsis thaliana (Mouse-ear cress) protein is Organelle RRM domain-containing protein 2, mitochondrial.